A 72-amino-acid chain; its full sequence is Translation initiation factor IF-1 (72 aa).

An S1-like domain is found at 1–72; that stretch reads MAKEDVIEMQ…SKGRIVFRAR (72 aa).

The protein belongs to the IF-1 family. As to quaternary structure, component of the 30S ribosomal translation pre-initiation complex which assembles on the 30S ribosome in the order IF-2 and IF-3, IF-1 and N-formylmethionyl-tRNA(fMet); mRNA recruitment can occur at any time during PIC assembly.

It is found in the cytoplasm. Its function is as follows. One of the essential components for the initiation of protein synthesis. Stabilizes the binding of IF-2 and IF-3 on the 30S subunit to which N-formylmethionyl-tRNA(fMet) subsequently binds. Helps modulate mRNA selection, yielding the 30S pre-initiation complex (PIC). Upon addition of the 50S ribosomal subunit IF-1, IF-2 and IF-3 are released leaving the mature 70S translation initiation complex. The sequence is that of Translation initiation factor IF-1 from Vibrio cholerae serotype O1 (strain ATCC 39541 / Classical Ogawa 395 / O395).